A 180-amino-acid polypeptide reads, in one-letter code: ATP-dependent protease subunit HslV (180 aa).

Threonine 7 is a catalytic residue. 3 residues coordinate Na(+): alanine 163, cysteine 166, and threonine 169.

The protein belongs to the peptidase T1B family. HslV subfamily. In terms of assembly, a double ring-shaped homohexamer of HslV is capped on each side by a ring-shaped HslU homohexamer. The assembly of the HslU/HslV complex is dependent on binding of ATP.

It localises to the cytoplasm. The catalysed reaction is ATP-dependent cleavage of peptide bonds with broad specificity.. Its activity is regulated as follows. Allosterically activated by HslU binding. In terms of biological role, protease subunit of a proteasome-like degradation complex believed to be a general protein degrading machinery. The protein is ATP-dependent protease subunit HslV of Cytophaga hutchinsonii (strain ATCC 33406 / DSM 1761 / CIP 103989 / NBRC 15051 / NCIMB 9469 / D465).